The following is a 318-amino-acid chain: Thymidylate synthase (318 aa).

DUMP contacts are provided by residues Arg25 and 180–181; that span reads RR. The active-site Nucleophile is Cys200. DUMP-binding positions include 220 to 223, Asn231, and 261 to 263; these read RSGD and HIY. Position 223 (Asp223) interacts with (6R)-5,10-methylene-5,6,7,8-tetrahydrofolate. Ala317 provides a ligand contact to (6R)-5,10-methylene-5,6,7,8-tetrahydrofolate.

The protein belongs to the thymidylate synthase family. Bacterial-type ThyA subfamily. As to quaternary structure, homodimer.

It localises to the cytoplasm. The enzyme catalyses dUMP + (6R)-5,10-methylene-5,6,7,8-tetrahydrofolate = 7,8-dihydrofolate + dTMP. Its pathway is pyrimidine metabolism; dTTP biosynthesis. Its function is as follows. Catalyzes the reductive methylation of 2'-deoxyuridine-5'-monophosphate (dUMP) to 2'-deoxythymidine-5'-monophosphate (dTMP) while utilizing 5,10-methylenetetrahydrofolate (mTHF) as the methyl donor and reductant in the reaction, yielding dihydrofolate (DHF) as a by-product. This enzymatic reaction provides an intracellular de novo source of dTMP, an essential precursor for DNA biosynthesis. The sequence is that of Thymidylate synthase from Bacillus cytotoxicus (strain DSM 22905 / CIP 110041 / 391-98 / NVH 391-98).